We begin with the raw amino-acid sequence, 704 residues long: Low calcium response locus protein D (704 aa).

7 helical membrane passes run 18–35, 42–61, 108–132, 200–220, 235–259, 278–297, and 304–320; these read IMLA…VLPL, ILIA…AIYI, FVVG…FLVI, AIAG…IGVT, ILTV…GIIV, VVAQ…LFGL, and VTFL…GYML.

Belongs to the FHIPEP (flagella/HR/invasion proteins export pore) family.

The protein localises to the cell inner membrane. Functionally, could be involved in the secretion of the yop virulence proteins. The chain is Low calcium response locus protein D (lcrD) from Yersinia pestis.